Consider the following 389-residue polypeptide: MATLQAIKYSRGKLLVLDQLRLPHEHHYDEVSTAEQAFDCIRSMRVRGAPAIAIVAALAHAVELHNGDCTATTPEDTIAYIESRLDYLKDSRPTAVDLSNAIALLKQAARAATVEGLAHPEAKEAILNAYIAAAETILAKDLDNNTSIGTHGAAWLQQQYHATPSRPLSVLTHCNTGSLATSGHGTALGIIRSLHQQQLLKHAYCTETRPYNQGSRLTAFELVFEGIPATLVTDSMAAALFALHRERMNIGAVVVGADRVVRNGDTANKIGTYALAVLARHHGVKFVVAAPTTSIDLETESGAGIEIEERKPEELTQVTGAVVNADGSVDASRTARVAIADQRIGVWNPAFDVTPHDLIDAIVTERGAVVKGADGRFDFSQVLPERWRW.

Catalysis depends on Asp-258, which acts as the Proton donor.

It belongs to the eIF-2B alpha/beta/delta subunits family. MtnA subfamily.

It is found in the cytoplasm. The protein resides in the nucleus. It carries out the reaction 5-(methylsulfanyl)-alpha-D-ribose 1-phosphate = 5-(methylsulfanyl)-D-ribulose 1-phosphate. It participates in amino-acid biosynthesis; L-methionine biosynthesis via salvage pathway; L-methionine from S-methyl-5-thio-alpha-D-ribose 1-phosphate: step 1/6. Its function is as follows. Catalyzes the interconversion of methylthioribose-1-phosphate (MTR-1-P) into methylthioribulose-1-phosphate (MTRu-1-P). The sequence is that of Methylthioribose-1-phosphate isomerase from Chaetomium globosum (strain ATCC 6205 / CBS 148.51 / DSM 1962 / NBRC 6347 / NRRL 1970) (Soil fungus).